The primary structure comprises 1353 residues: Tenascin-R (1353 aa).

The N-terminal stretch at 1–33 (MGTDSENPVLRNVLISFNLLLLGAVLKPFECRL) is a signal peptide. Residues 132–156 (SLQELLSRIEMLEREVSMLRDQCNS) are a coiled coil. Residues Asn179 and Asn197 are each glycosylated (N-linked (GlcNAc...) asparagine). 4 EGF-like domains span residues 187 to 198 (CICSEGWAGSNC), 234 to 260 (CPAG…GEDC), 265 to 291 (CPRD…GEDC), and 292 to 323 (GWLR…QDCS). Asn277 is a glycosylation site (N-linked (GlcNAc...) asparagine). Intrachain disulfides connect Cys296–Cys306 and Cys313–Cys322. Fibronectin type-III domains follow at residues 327-419 (PPEN…TPQG), 420-504 (LKFK…TLID), 505-594 (GPTQ…TEID), 595-686 (APKN…TELD), 687-776 (SPRD…VRPI), 777-863 (TQLH…TGMD), 864-952 (APKD…AMDA), 953-1037 (PLGV…TLLD), and 1038-1126 (PPTN…GGRV). N-linked (GlcNAc...) asparagine glycosylation is found at Asn391, Asn469, and Asn580. Asn734, Asn790, Asn872, Asn1031, Asn1041, Asn1256, and Asn1342 each carry an N-linked (GlcNAc...) asparagine glycan. The region spanning 1124 to 1339 (GRVFANPQDC…FVEMKMRPYN (216 aa)) is the Fibrinogen C-terminal domain.

This sequence belongs to the tenascin family. In terms of assembly, forms homodimers and homotrimers. Interacts with CNTN1, NFASC and CSPG5. As to expression, brain specific.

The protein resides in the secreted. Its subcellular location is the extracellular space. It is found in the extracellular matrix. Neural extracellular matrix (ECM) protein involved in interactions with different cells and matrix components. Involved in cell attachment and neurite formation. Interaction with CNTN1 enhances the neurite outgrowth. In Gallus gallus (Chicken), this protein is Tenascin-R (TNR).